The chain runs to 409 residues: Protein PHOSPHATE STARVATION RESPONSE 1 (409 aa).

The span at 1-15 (MEARPVHRSGSRDLT) shows a compositional bias: basic and acidic residues. Disordered stretches follow at residues 1–42 (MEAR…NSQL), 86–108 (EKQQHYTGSSSNNAVQTPSNNDS), and 178–226 (ETNS…TGKA). Composition is skewed to polar residues over residues 16 to 26 (RTSSIPSTQKP) and 90 to 108 (HYTGSSSNNAVQTPSNNDS). Residues 192 to 224 (QIPQPQIVQQQPSPSVELRPVSTTSSNSNNGTG) show a composition bias toward low complexity. The region spanning 222 to 282 (GTGKARMRWT…HLQKYRTARY (61 aa)) is the HTH myb-type domain. The segment at residues 253–278 (PKGVLKIMKVEGLTIYHVKSHLQKYR) is a DNA-binding region (H-T-H motif). Residues 314–334 (TEALRLQMEVQKQLHEQLEIQ) adopt a coiled-coil conformation. An LHEQLE motif is present at residues 327–332 (LHEQLE). The segment covering 358–370 (GLTKGTASTSDSA) has biased composition (polar residues). The segment at 358–409 (GLTKGTASTSDSAAKSEQEDKKTADSKEVPEEETRKCEELESPQPKRPKIDN) is disordered. Residues 371-396 (AKSEQEDKKTADSKEVPEEETRKCEE) show a composition bias toward basic and acidic residues. S399 is subject to Phosphoserine.

It belongs to the MYB-CC family. Homodimers and heterodimers. Interacts with SPX1 in a Pi-dependent manner. Does not interact with PHL2 or PHL3. In terms of processing, sumoylated by SIZ1. Sumoylation controls phosphate deficiency responses.

The protein localises to the nucleus. Its function is as follows. Transcription factor involved in phosphate starvation signaling. Binds as a dimer to P1BS, an imperfect palindromic sequence 5'-GNATATNC-3', to promote the expression of inorganic phosphate (Pi) starvation-responsive genes. SPX1 is a competitive inhibitor of this DNA-binding. PHR1 binding to its targets is low Pi-dependent. Regulates the expression of miR399. Regulates the expression of IPS1 (At3g09922), a non-coding RNA that mimics the target of miR399 to block the cleavage of PHO2 under Pi-deficient conditions. Regulates lipid remodeling and triacylglycerol accumulation during phosphorus starvation. Required for the shoot-specific hypoxic response. Regulates FER1 expression upon phosphate starvation, linking iron and phosphate homeostasis. Contributes to the homeostasis of both sulfate and phosphate in plants under phosphate deficiency. Required for adaptation to high light and retaining functional photosynthesis during phosphate starvation. Involved in the coregulation of Zn and Pi homeostasis. The sequence is that of Protein PHOSPHATE STARVATION RESPONSE 1 from Arabidopsis thaliana (Mouse-ear cress).